A 90-amino-acid chain; its full sequence is High mobility group nucleosome-binding domain-containing protein 4 (90 aa).

The segment at 1–90 is disordered; that stretch reads MPKRKAKGDA…QKAEGTGDAK (90 aa). The segment covering 7–23 has biased composition (basic and acidic residues); the sequence is KGDAKGDKGKVKDEPQR. S29 bears the ADP-ribosylserine mark. The span at 37-64 shows a compositional bias: basic and acidic residues; the sequence is PEPRPKKAPAKKGEKLAKGRKGKAEVSK. The segment covering 65-83 has biased composition (polar residues); sequence DGNNPAKNRDASTVQSQKA. S80 is modified (phosphoserine). The residue at position 82 (K82) is an N6-acetyllysine.

It belongs to the HMGN family.

It is found in the nucleus. The sequence is that of High mobility group nucleosome-binding domain-containing protein 4 (HMGN4) from Bos taurus (Bovine).